Consider the following 407-residue polypeptide: Probable tRNA sulfurtransferase (407 aa).

The region spanning 61–165 (NEITYRLSKI…LDAIYMYEEV (105 aa)) is the THUMP domain. Residues 183–184 (ML), 208–209 (HF), Arg265, Gly287, and Gln296 each bind ATP.

This sequence belongs to the ThiI family.

The protein resides in the cytoplasm. The catalysed reaction is [ThiI sulfur-carrier protein]-S-sulfanyl-L-cysteine + a uridine in tRNA + 2 reduced [2Fe-2S]-[ferredoxin] + ATP + H(+) = [ThiI sulfur-carrier protein]-L-cysteine + a 4-thiouridine in tRNA + 2 oxidized [2Fe-2S]-[ferredoxin] + AMP + diphosphate. It carries out the reaction [ThiS sulfur-carrier protein]-C-terminal Gly-Gly-AMP + S-sulfanyl-L-cysteinyl-[cysteine desulfurase] + AH2 = [ThiS sulfur-carrier protein]-C-terminal-Gly-aminoethanethioate + L-cysteinyl-[cysteine desulfurase] + A + AMP + 2 H(+). It functions in the pathway cofactor biosynthesis; thiamine diphosphate biosynthesis. In terms of biological role, catalyzes the ATP-dependent transfer of a sulfur to tRNA to produce 4-thiouridine in position 8 of tRNAs, which functions as a near-UV photosensor. Also catalyzes the transfer of sulfur to the sulfur carrier protein ThiS, forming ThiS-thiocarboxylate. This is a step in the synthesis of thiazole, in the thiamine biosynthesis pathway. The sulfur is donated as persulfide by IscS. The polypeptide is Probable tRNA sulfurtransferase (Staphylococcus aureus (strain NCTC 8325 / PS 47)).